The sequence spans 200 residues: Inner membrane-spanning protein YciB (200 aa).

The next 6 helical transmembrane spans lie at 1 to 21 (MPPLLKLALELGPLLVFFFAN), 37 to 57 (IGAPIFLATALFMAATVIALA), 66 to 86 (LAIMPLVSGIVVLVFGALTLW), 103 to 123 (LFGGILLGGLFFGKSLLGYVF), 136 to 156 (KLTLRWGLFFIFLAIVNEIVW), and 167 to 187 (FKVWGIMPITIVFTLLQMPLI).

This sequence belongs to the YciB family.

The protein localises to the cell inner membrane. In terms of biological role, plays a role in cell envelope biogenesis, maintenance of cell envelope integrity and membrane homeostasis. In Brucella melitensis biotype 1 (strain ATCC 23456 / CCUG 17765 / NCTC 10094 / 16M), this protein is Inner membrane-spanning protein YciB.